A 496-amino-acid chain; its full sequence is D-2-hydroxyglutarate--pyruvate transhydrogenase DLD3 (496 aa).

Residue lysine 17 forms a Glycyl lysine isopeptide (Lys-Gly) (interchain with G-Cter in ubiquitin) linkage. One can recognise an FAD-binding PCMH-type domain in the interval 64 to 243 (YRGQSNLILL…TGVSIVAAAK (180 aa)).

Belongs to the FAD-binding oxidoreductase/transferase type 4 family. The cofactor is FAD.

The protein resides in the cytoplasm. The catalysed reaction is (R)-lactate + 2 Fe(III)-[cytochrome c] = 2 Fe(II)-[cytochrome c] + pyruvate + 2 H(+). The enzyme catalyses (R)-2-hydroxyglutarate + pyruvate = (R)-lactate + 2-oxoglutarate. Catalyzes the reversible oxidation of (R)-2-hydroxyglutarate to 2-oxoglutarate coupled to reduction of pyruvate to (R)-lactate. Can also use oxaloacetate as electron acceptor instead of pyruvate producing (R)-malate. This Saccharomyces cerevisiae (strain ATCC 204508 / S288c) (Baker's yeast) protein is D-2-hydroxyglutarate--pyruvate transhydrogenase DLD3 (DLD3).